Here is a 385-residue protein sequence, read N- to C-terminus: UPF0744 protein YSD83 (385 aa).

It belongs to the UPF0744 family.

In Saccharomyces paradoxus (Yeast), this protein is UPF0744 protein YSD83 (YSD83).